The primary structure comprises 560 residues: MTFQRPLYIPFAGPALLESPLLNKGSAFSQEERNNFNLTGLLPHNIETIESQSTRAYQQLSSFKSDLDKHIYLRNIQDTNETLFHHLIENHLEEVMPLIYTPTVGLACEQFSKIYRRKRGLFVSYPERHKIDDMLQNATKQNVKVIVVTDGERILGLGDQGIGGMGIPIGKLALYTACGGISPAYCLPIVLDVGTNNSQLLADPMYMGWRNPRITGEEYNEFVDLFIQAVKRRWPEVLLQFEDFAQTNATPLLNKYRDQICCFNDDIQGTAAVSVGTLIAACQNKGEKLSDQRIAFLGSGSAGCGIAQHIVRQMQREGLTQEQARQRVFMVDRYGLLTDQMTNLQAFQQPLIQYTKDLSHWDISSHIGLEQVIKQGNISVLFGVSGQPGLFTQEVVESLCANVDHPIVLPLSNPTSRVEATPKDITTWSHGQAIVATGSPFPPTLYENEYIEVSQCNNSYIFPGIGLGVLAARATAISDNMLMAASQALADASMQYEKVKGALLPPLGEIRPISKSIAYAVAKQAIADGLALPVSEETMQRRLVDNFWAPKYRTYRRTSF.

Y100 (proton donor) is an active-site residue. An NAD(+)-binding site is contributed by R153. The active-site Proton acceptor is the K171. A divalent metal cation is bound by residues E242, D243, and D266. NAD(+) contacts are provided by D266 and N413.

This sequence belongs to the malic enzymes family. As to quaternary structure, homotetramer. It depends on Mg(2+) as a cofactor. The cofactor is Mn(2+).

It catalyses the reaction (S)-malate + NAD(+) = pyruvate + CO2 + NADH. It carries out the reaction oxaloacetate + H(+) = pyruvate + CO2. The sequence is that of NAD-dependent malic enzyme from Psychromonas ingrahamii (strain DSM 17664 / CCUG 51855 / 37).